The primary structure comprises 719 residues: Glycine--tRNA ligase beta subunit (719 aa).

The segment at 65 to 84 (PDREEEIKGPPAKAAFKDGK) is disordered.

This sequence belongs to the class-II aminoacyl-tRNA synthetase family. Tetramer of two alpha and two beta subunits.

The protein resides in the cytoplasm. The enzyme catalyses tRNA(Gly) + glycine + ATP = glycyl-tRNA(Gly) + AMP + diphosphate. This Trichodesmium erythraeum (strain IMS101) protein is Glycine--tRNA ligase beta subunit.